A 168-amino-acid polypeptide reads, in one-letter code: Ribosome maturation factor RimP (168 aa).

The protein belongs to the RimP family.

The protein localises to the cytoplasm. In terms of biological role, required for maturation of 30S ribosomal subunits. In Rickettsia bellii (strain OSU 85-389), this protein is Ribosome maturation factor RimP.